The chain runs to 137 residues: NADPH-dependent 7-cyano-7-deazaguanine reductase (137 aa).

The active-site Thioimide intermediate is the Cys-45. The active-site Proton donor is Asp-52. Substrate contacts are provided by residues 68-70 (VEL) and 87-88 (QE).

The protein belongs to the GTP cyclohydrolase I family. QueF type 1 subfamily.

It is found in the cytoplasm. It catalyses the reaction 7-aminomethyl-7-carbaguanine + 2 NADP(+) = 7-cyano-7-deazaguanine + 2 NADPH + 3 H(+). It functions in the pathway tRNA modification; tRNA-queuosine biosynthesis. Its function is as follows. Catalyzes the NADPH-dependent reduction of 7-cyano-7-deazaguanine (preQ0) to 7-aminomethyl-7-deazaguanine (preQ1). The sequence is that of NADPH-dependent 7-cyano-7-deazaguanine reductase from Thermotoga petrophila (strain ATCC BAA-488 / DSM 13995 / JCM 10881 / RKU-1).